A 309-amino-acid chain; its full sequence is Histidine protein methyltransferase 1 homolog (309 aa).

2 disordered regions span residues 1 to 37 (MSFK…FDSS) and 79 to 111 (KPFK…NNKD). Positions 25–37 (EESKLDISEFDSS) are enriched in basic and acidic residues. Residues 84–109 (NQDNNNDNNVNSNDKNDNNNNNNNNN) show a composition bias toward low complexity. S-adenosyl-L-methionine-binding positions include 132–136 (LWECS), Gly159, 179–181 (QDY), 209–211 (GDW), and Ser229.

Belongs to the methyltransferase superfamily. METTL18 family.

It is found in the cytoplasm. The protein resides in the cytosol. The protein localises to the nucleus. Its subcellular location is the nucleolus. The catalysed reaction is L-histidyl-[protein] + S-adenosyl-L-methionine = N(tele)-methyl-L-histidyl-[protein] + S-adenosyl-L-homocysteine + H(+). Protein-L-histidine N-tele-methyltransferase that probably monomethylates RPL3. Through the methylation of RPL3 may regulate the dynamics of pre-rRNA processing, ribosome biogenesis, and translation. The polypeptide is Histidine protein methyltransferase 1 homolog (Dictyostelium discoideum (Social amoeba)).